The following is a 216-amino-acid chain: UPF0598 protein C8orf82 (216 aa).

This sequence belongs to the UPF0598 family.

The protein is UPF0598 protein C8orf82 (C8orf82) of Homo sapiens (Human).